An 84-amino-acid chain; its full sequence is U1-theraphotoxin-Hs1a (84 aa).

An N-terminal signal peptide occupies residues 1-22 (MKVTLIAILTCAAVLVLHTTAA). Positions 23–48 (EELEESQLMEVGMPDTELAAVDEERL) are excised as a propeptide. 3 cysteine pairs are disulfide-bonded: cysteine 51–cysteine 65, cysteine 55–cysteine 76, and cysteine 70–cysteine 81.

Belongs to the neurotoxin 12 (Hwtx-2) family. 02 (Hwtx-2) subfamily. Expressed by the venom gland.

It is found in the secreted. In terms of biological role, blocks neuromuscular transmission. Acts cooperatively to potentiate the activity of huwentoxin-I. Paralyzes locusts and kills mice following intracerebroventricular injection. The sequence is that of U1-theraphotoxin-Hs1a from Cyriopagopus schmidti (Chinese bird spider).